Consider the following 489-residue polypeptide: Cytochrome P450 monooxygenase ataF (489 aa).

A helical transmembrane segment spans residues 12 to 32 (WLEHSAVIATLFAFGTALFLV). A glycan (N-linked (GlcNAc...) asparagine) is linked at Asn-289. Residue Cys-434 participates in heme binding.

This sequence belongs to the cytochrome P450 family. Requires heme as cofactor.

The protein resides in the membrane. It functions in the pathway mycotoxin biosynthesis. In terms of biological role, cytochrome P450 monooxygenase; part of the gene cluster that mediates the biosynthesis of acetylaranotin, a member of the epipolythiodioxopiperazine (ETP) class of toxins characterized by a disulfide-bridged cyclic dipeptide. The first step of acetylaranotin biosynthesis is performed by the NRPS ataP which produces diketopiperazine cyclo-L-Phe-L-Phe via the condensation of 2 phenylalanines (L-Phe). The ataC domain of ataTC then catalyzes the formation of bishydroxylation of cyclo-L-Phe-L-Phe. The glutathione S-transferase domain ataG in ataIMG further catalyzes the conjugation of two glutathiones to the bishydroxylated intermediate. Next, the dipeptidase ataJ removes the Glu residues. The following step is performed by the carbon sulfur lyase domain ataI of ataIMG which may convert the bis-cysteinyl adduct to yield an epidithiol intermediate. The ataT domain from ataTC then catalyzes the oxidation of the free dithiols, followed by a cyclization step catalyzed by the cytochrome P450 ataF. AtaF probably acts as an epoxidase to promote a dual epoxidation formation at C8 and C9 along with C8' and C9', followed by the spontaneous nucleophilic attack of the amide nitrogens N10 and N10' to yield an intermediate with the pyrrolidine partial structure. The final steps of acetylaranotin biosynthesis involve the acetylation and ring rearrangement of an epitetrathiodiketopiperazine intermediate to produce acetylaranotin. AtaH probably catalyzes the acetylation of epitetrathiodiketopiperazine to produce a diacetate and ataY is responsible for the formation of the dihydrooxepin moiety that converts the diacetate intermediate to acetylaranotin via acetylapoaranotin. Both enzymes could function independently in the absence of the other. The acetylaranotin bis-thiomethyltransferase ataS located outside of acetylaranotin gene cluster is the main thiomethyltransferase responsible for converting acetylaranotin and its related intermediates to their methylated forms. This is Cytochrome P450 monooxygenase ataF from Aspergillus terreus (strain NIH 2624 / FGSC A1156).